The primary structure comprises 334 residues: Ventral anterior homeobox 1 (334 aa).

Residues 1–34 (MFGKPDKMDVRCHSDAEAARVSKNAHKESRESKG) show a composition bias toward basic and acidic residues. A disordered region spans residues 1–41 (MFGKPDKMDVRCHSDAEAARVSKNAHKESRESKGAEGNLPA). Residues 100 to 159 (PKRTRTSFTAEQLYRLEMEFQRCQYVVGRERTELARQLNLSETQVKVWFQNRRTKQKKDQ) constitute a DNA-binding region (homeobox). Disordered regions lie at residues 234–263 (PGPA…GLHA) and 314–334 (SAFE…KALD). Positions 323–334 (NNKEGAEKKALD) are enriched in basic and acidic residues.

It belongs to the EMX homeobox family.

The protein localises to the nucleus. Its function is as follows. Transcription factor that may function in dorsoventral specification of the forebrain. Required for axon guidance and major tract formation in the developing forebrain. May contribute to the differentiation of the neuroretina, pigmented epithelium and optic stalk. This Homo sapiens (Human) protein is Ventral anterior homeobox 1 (VAX1).